A 154-amino-acid chain; its full sequence is Myoglobin (154 aa).

The region spanning 2-148 (GLSDGEWHLV…FRNDIAAKYK (147 aa)) is the Globin domain. Ser4 bears the Phosphoserine mark. Position 65 (His65) interacts with nitrite. His65 is an O2 binding site. Thr68 carries the phosphothreonine modification. Position 94 (His94) interacts with heme b.

It belongs to the globin family. In terms of assembly, monomeric.

The protein localises to the cytoplasm. It localises to the sarcoplasm. The enzyme catalyses Fe(III)-heme b-[protein] + nitric oxide + H2O = Fe(II)-heme b-[protein] + nitrite + 2 H(+). It catalyses the reaction H2O2 + AH2 = A + 2 H2O. In terms of biological role, monomeric heme protein which primary function is to store oxygen and facilitate its diffusion within muscle tissues. Reversibly binds oxygen through a pentacoordinated heme iron and enables its timely and efficient release as needed during periods of heightened demand. Depending on the oxidative conditions of tissues and cells, and in addition to its ability to bind oxygen, it also has a nitrite reductase activity whereby it regulates the production of bioactive nitric oxide. Under stress conditions, like hypoxia and anoxia, it also protects cells against reactive oxygen species thanks to its pseudoperoxidase activity. This chain is Myoglobin (MB), found in Halichoerus grypus (Gray seal).